The primary structure comprises 252 residues: Putative cytosolic acyl coenzyme A thioester hydrolase-like (252 aa).

2 HotDog ACOT-type domains span residues 1–90 (MIKE…LSLT) and 146–252 (SYSQ…SVFT).

Homodimer. As to expression, expressed in all tissues examined. Up-regulated in nasopharyngeal carcinoma (at protein level).

Its subcellular location is the cytoplasm. It catalyses the reaction hexadecanoyl-CoA + H2O = hexadecanoate + CoA + H(+). Functionally, acyl-CoA thioesterases are a group of enzymes that catalyze the hydrolysis of acyl-CoAs to the free fatty acid and coenzyme A (CoASH), providing the potential to regulate intracellular levels of acyl-CoAs, free fatty acids and CoASH. The protein is Putative cytosolic acyl coenzyme A thioester hydrolase-like (ACOT7L) of Homo sapiens (Human).